A 179-amino-acid polypeptide reads, in one-letter code: MGIFDLAKKITHSREYTKSIDEIFVGELINFMYKNGAVLTEINSPTESSHSLTFKFVNHPVLHILRITVDRKIEGMASKILGSQSVLTFEAVIKNDLVEPNDVLVMYQTDFKNMFKIPIFGKVKINHDLNYIIATTTYIEDLGKYIKSDRIEKEALREELEKILNTLVKHLEPLKKKFD.

A coiled-coil region spans residues 139-172 (IEDLGKYIKSDRIEKEALREELEKILNTLVKHLE).

This is an uncharacterized protein from Methanocaldococcus jannaschii (strain ATCC 43067 / DSM 2661 / JAL-1 / JCM 10045 / NBRC 100440) (Methanococcus jannaschii).